We begin with the raw amino-acid sequence, 671 residues long: DNA polymerase kappa (671 aa).

The 181-residue stretch at 105–285 folds into the UmuC domain; it reads WLHVDMDAFY…LPVRKIGGIG (181 aa). Residues Asp109 and Asp200 each coordinate Mg(2+). Glu201 is a catalytic residue. The segment at 576–613 adopts a UBZ3-type zinc-finger fold; it reads YWIDGYKCVLCGIELPPSFVEERQEHSDFHLAQRLQNE. Residues Cys583, Cys586, His601, and His605 each contribute to the Zn(2+) site. Positions 607–671 are disordered; sequence AQRLQNEETG…NQNSNETQRK (65 aa). Residues 625-632 carry the Nuclear localization signal motif; that stretch reads KRRILGKE. Residues 629–650 show a composition bias toward basic and acidic residues; the sequence is LGKEKVNSKPKKQKPDQKDSSK. Positions 659-671 are enriched in polar residues; the sequence is TKSNQNSNETQRK.

This sequence belongs to the DNA polymerase type-Y family. It depends on Mg(2+) as a cofactor. As to expression, expressed in roots, leaves, stems, flowers and siliques. Present in endoreduplicating cells.

It localises to the nucleus. The catalysed reaction is DNA(n) + a 2'-deoxyribonucleoside 5'-triphosphate = DNA(n+1) + diphosphate. Unable to bypass a single 1,N(6)-ethenoadenine (epsilon-dA) or an abasic site lesions in DNA templates. In terms of biological role, template-directed low-fidelity DNA polymerase specifically involved in DNA repair. Able to extend primer-terminal mispairs, and to insert nucleotides opposite to a single 7,8-dihydro-8-oxoGuanine (8-oxoG) lesion and moderately extend from the resulting primer end, thus leading to both error-free and error-prone bypass of 8-oxoG DNA lesions. Probably involved in consecutive DNA replication cycles in the absence of mitosis. Binds preferentially template-primer DNA substrates or single-stranded DNA. Plays an important role in translesion synthesis, where the normal high-fidelity DNA polymerases cannot proceed and DNA synthesis stalls. Depending on the context, it inserts the correct base, but causes frequent base transitions, transversions and frameshifts. The sequence is that of DNA polymerase kappa from Arabidopsis thaliana (Mouse-ear cress).